Reading from the N-terminus, the 388-residue chain is Gastricsin (388 aa).

The N-terminal stretch at 1–16 is a signal peptide; sequence MKWMVVVLVCLQLLEA. Positions 17–59 are cleaved as a propeptide — activation peptide; the sequence is AVVKVPLKKFKSIRETMKEKGLLGEFLRTHKYDPAWKYRFGDL. The Peptidase A1 domain maps to 73-385; sequence YFGEISIGTP…DLGNNRVGFA (313 aa). Residue Asp91 is part of the active site. Cystine bridges form between Cys104–Cys109 and Cys267–Cys271. Residue Asp276 is part of the active site. A disulfide bond links Cys310 and Cys343.

Belongs to the peptidase A1 family.

The protein resides in the secreted. It catalyses the reaction More restricted specificity than pepsin A, but shows preferential cleavage at Tyr-|-Xaa bonds. High activity on hemoglobin.. Its function is as follows. Hydrolyzes a variety of proteins. In Homo sapiens (Human), this protein is Gastricsin (PGC).